A 550-amino-acid chain; its full sequence is Crystal protein (550 aa).

The signal sequence occupies residues 1 to 19 (MNKIIILLIILLSFDIISA). An intrachain disulfide couples Cys91 to Cys111. Asn156 is a glycosylation site (N-linked (GlcNAc...) asparagine). Ser215 serves as the catalytic Acyl-ester intermediate. Cys267 and Cys274 are disulfide-bonded. Catalysis depends on charge relay system residues Glu340 and His443. N-linked (GlcNAc...) asparagine glycosylation occurs at Asn506.

Belongs to the type-B carboxylesterase/lipase family.

Its subcellular location is the cytoplasmic vesicle. The protein resides in the esterosome membrane. The sequence is that of Crystal protein (cryS) from Dictyostelium discoideum (Social amoeba).